Here is a 638-residue protein sequence, read N- to C-terminus: Chaperone protein DnaK 2 (638 aa).

T199 carries the phosphothreonine; by autocatalysis modification. Residues 604–626 (AKEQAQSAPEGAQEADAAPADDV) are disordered. Residues 613–624 (EGAQEADAAPAD) are compositionally biased toward low complexity.

It belongs to the heat shock protein 70 family.

Acts as a chaperone. The sequence is that of Chaperone protein DnaK 2 from Colwellia psychrerythraea (strain 34H / ATCC BAA-681) (Vibrio psychroerythus).